The sequence spans 357 residues: Glutamine synthetase root isozyme B (357 aa).

Residues 19-99 enclose the GS beta-grasp domain; the sequence is IIAEYIWVGG…VICDVYTPAG (81 aa). Residues 106 to 357 form the GS catalytic domain; that stretch reads KRYNAAKIFS…AETTILWKKS (252 aa).

It belongs to the glutamine synthetase family. Homooctamer.

The protein localises to the cytoplasm. It carries out the reaction L-glutamate + NH4(+) + ATP = L-glutamine + ADP + phosphate + H(+). The protein is Glutamine synthetase root isozyme B (GS3B) of Pisum sativum (Garden pea).